A 579-amino-acid polypeptide reads, in one-letter code: Probable pectinesterase/pectinesterase inhibitor 7 (579 aa).

The signal sequence occupies residues 1–20; it reads MESPIFILITLSFFLQSVLA. The interval 22–185 is pectinesterase inhibitor 7; it reads SQTLSNSSTI…TKLLGVSLAL (164 aa). N-linked (GlcNAc...) asparagine glycosylation is found at asparagine 27, asparagine 115, asparagine 174, asparagine 274, asparagine 277, asparagine 287, asparagine 326, and asparagine 333. Residues 265 to 564 are pectinesterase 7; the sequence is VTVSQDGTGN…TVTGLFIEAD (300 aa). Threonine 342 is a substrate binding site. N-linked (GlcNAc...) asparagine glycosylation occurs at asparagine 359. Glutamine 372 contacts substrate. Aspartate 395 (proton donor; for pectinesterase activity) is an active-site residue. A disulfide bond links cysteine 409 and cysteine 429. The Nucleophile; for pectinesterase activity role is filled by aspartate 416. 2 N-linked (GlcNAc...) asparagine glycosylation sites follow: asparagine 462 and asparagine 475. Substrate is bound by residues arginine 484 and tryptophan 486. Asparagine 526, asparagine 533, asparagine 547, and asparagine 553 each carry an N-linked (GlcNAc...) asparagine glycan.

It in the N-terminal section; belongs to the PMEI family. The protein in the C-terminal section; belongs to the pectinesterase family. Expressed in siliques.

It localises to the secreted. The protein localises to the cell wall. The catalysed reaction is [(1-&gt;4)-alpha-D-galacturonosyl methyl ester](n) + n H2O = [(1-&gt;4)-alpha-D-galacturonosyl](n) + n methanol + n H(+). Its pathway is glycan metabolism; pectin degradation; 2-dehydro-3-deoxy-D-gluconate from pectin: step 1/5. Acts in the modification of cell walls via demethylesterification of cell wall pectin. In Arabidopsis thaliana (Mouse-ear cress), this protein is Probable pectinesterase/pectinesterase inhibitor 7 (PME7).